We begin with the raw amino-acid sequence, 71 residues long: uncharacterized protein (71 aa).

Positions 1–10 (MHRKKRKKEK) are enriched in basic residues. Residues 1-20 (MHRKKRKKEKKRTEKDNTTN) form a disordered region. A helical transmembrane segment spans residues 21–43 (LPPLFLFPCSLSLPTLLAPVHYI).

The protein resides in the membrane. This is an uncharacterized protein from Saccharomyces cerevisiae (strain ATCC 204508 / S288c) (Baker's yeast).